We begin with the raw amino-acid sequence, 274 residues long: Dermonecrotic toxin LspiSicTox-betaIII1 G (274 aa).

His-5 is an active-site residue. Mg(2+) is bound by residues Glu-25 and Asp-27. The Nucleophile role is filled by His-41. Disulfide bonds link Cys-45–Cys-51 and Cys-47–Cys-189. N-linked (GlcNAc...) asparagine glycosylation occurs at Asn-66. Asp-85 is a Mg(2+) binding site.

It belongs to the arthropod phospholipase D family. Class II subfamily. The cofactor is Mg(2+). As to expression, expressed by the venom gland.

It is found in the secreted. It catalyses the reaction an N-(acyl)-sphingosylphosphocholine = an N-(acyl)-sphingosyl-1,3-cyclic phosphate + choline. It carries out the reaction an N-(acyl)-sphingosylphosphoethanolamine = an N-(acyl)-sphingosyl-1,3-cyclic phosphate + ethanolamine. The enzyme catalyses a 1-acyl-sn-glycero-3-phosphocholine = a 1-acyl-sn-glycero-2,3-cyclic phosphate + choline. The catalysed reaction is a 1-acyl-sn-glycero-3-phosphoethanolamine = a 1-acyl-sn-glycero-2,3-cyclic phosphate + ethanolamine. Functionally, dermonecrotic toxins cleave the phosphodiester linkage between the phosphate and headgroup of certain phospholipids (sphingolipid and lysolipid substrates), forming an alcohol (often choline) and a cyclic phosphate. This toxin acts on sphingomyelin (SM). It may also act on ceramide phosphoethanolamine (CPE), lysophosphatidylcholine (LPC) and lysophosphatidylethanolamine (LPE), but not on lysophosphatidylserine (LPS), and lysophosphatidylglycerol (LPG). It acts by transphosphatidylation, releasing exclusively cyclic phosphate products as second products. Induces dermonecrosis, hemolysis, increased vascular permeability, edema, inflammatory response, and platelet aggregation. The protein is Dermonecrotic toxin LspiSicTox-betaIII1 G of Loxosceles spinulosa (Recluse spider).